Reading from the N-terminus, the 271-residue chain is Formamidopyrimidine-DNA glycosylase (271 aa).

The Schiff-base intermediate with DNA role is filled by proline 2. Glutamate 3 functions as the Proton donor in the catalytic mechanism. The active-site Proton donor; for beta-elimination activity is the lysine 58. DNA contacts are provided by histidine 91, arginine 110, and arginine 152. The FPG-type zinc-finger motif lies at 237-271 (WVYGRTGQPCRKCGALVSKTRQGQRSSFFCAQCQK). Arginine 261 serves as the catalytic Proton donor; for delta-elimination activity.

This sequence belongs to the FPG family. As to quaternary structure, monomer. The cofactor is Zn(2+).

The enzyme catalyses Hydrolysis of DNA containing ring-opened 7-methylguanine residues, releasing 2,6-diamino-4-hydroxy-5-(N-methyl)formamidopyrimidine.. The catalysed reaction is 2'-deoxyribonucleotide-(2'-deoxyribose 5'-phosphate)-2'-deoxyribonucleotide-DNA = a 3'-end 2'-deoxyribonucleotide-(2,3-dehydro-2,3-deoxyribose 5'-phosphate)-DNA + a 5'-end 5'-phospho-2'-deoxyribonucleoside-DNA + H(+). Its function is as follows. Involved in base excision repair of DNA damaged by oxidation or by mutagenic agents. Acts as a DNA glycosylase that recognizes and removes damaged bases. Has a preference for oxidized purines, such as 7,8-dihydro-8-oxoguanine (8-oxoG). Has AP (apurinic/apyrimidinic) lyase activity and introduces nicks in the DNA strand. Cleaves the DNA backbone by beta-delta elimination to generate a single-strand break at the site of the removed base with both 3'- and 5'-phosphates. The chain is Formamidopyrimidine-DNA glycosylase from Nitrosomonas eutropha (strain DSM 101675 / C91 / Nm57).